The chain runs to 505 residues: Glycerol kinase (505 aa).

An ADP-binding site is contributed by Thr-12. The ATP site is built by Thr-12, Thr-13, and Ser-14. Thr-12 is a binding site for sn-glycerol 3-phosphate. Arg-16 is a binding site for ADP. Positions 82, 83, 134, and 249 each coordinate sn-glycerol 3-phosphate. The glycerol site is built by Arg-82, Glu-83, Tyr-134, Asp-249, and Gln-250. Residues Thr-271 and Gly-315 each coordinate ADP. ATP-binding residues include Thr-271, Gly-315, Gln-319, and Gly-416. Gly-416 and Asn-420 together coordinate ADP.

It belongs to the FGGY kinase family.

The enzyme catalyses glycerol + ATP = sn-glycerol 3-phosphate + ADP + H(+). It functions in the pathway polyol metabolism; glycerol degradation via glycerol kinase pathway; sn-glycerol 3-phosphate from glycerol: step 1/1. Inhibited by fructose 1,6-bisphosphate (FBP). Functionally, key enzyme in the regulation of glycerol uptake and metabolism. Catalyzes the phosphorylation of glycerol to yield sn-glycerol 3-phosphate. The protein is Glycerol kinase of Mycolicibacterium gilvum (strain PYR-GCK) (Mycobacterium gilvum (strain PYR-GCK)).